We begin with the raw amino-acid sequence, 327 residues long: Tagatose 1,6-diphosphate aldolase 2 (327 aa).

The protein belongs to the aldolase LacD family.

The catalysed reaction is D-tagatofuranose 1,6-bisphosphate = D-glyceraldehyde 3-phosphate + dihydroxyacetone phosphate. It participates in carbohydrate metabolism; D-tagatose 6-phosphate degradation; D-glyceraldehyde 3-phosphate and glycerone phosphate from D-tagatose 6-phosphate: step 2/2. This is Tagatose 1,6-diphosphate aldolase 2 (lacD2) from Streptococcus pyogenes serotype M1.